A 279-amino-acid chain; its full sequence is 4-deoxy-L-threo-5-hexosulose-uronate ketol-isomerase (279 aa).

His197, His199, Glu204, and His246 together coordinate Zn(2+).

Belongs to the KduI family. It depends on Zn(2+) as a cofactor.

It carries out the reaction 5-dehydro-4-deoxy-D-glucuronate = 3-deoxy-D-glycero-2,5-hexodiulosonate. It functions in the pathway glycan metabolism; pectin degradation; 2-dehydro-3-deoxy-D-gluconate from pectin: step 4/5. In terms of biological role, catalyzes the isomerization of 5-dehydro-4-deoxy-D-glucuronate to 3-deoxy-D-glycero-2,5-hexodiulosonate. The protein is 4-deoxy-L-threo-5-hexosulose-uronate ketol-isomerase of Kineococcus radiotolerans (strain ATCC BAA-149 / DSM 14245 / SRS30216).